The primary structure comprises 504 residues: Anaerobic nitric oxide reductase transcription regulator NorR (504 aa).

Position 57 is a 4-aspartylphosphate (D57). Residues 187-416 (MIGLSPGMTQ…LEHAIHRAVV (230 aa)) form the Sigma-54 factor interaction domain. ATP contacts are provided by residues 215 to 222 (GETGTGKE) and 278 to 287 (ADNGTLFLDE). The segment at residues 479 to 498 (WAACARMLETDVANLHRLAK) is a DNA-binding region (H-T-H motif).

It participates in nitrogen metabolism; nitric oxide reduction. Functionally, required for the expression of anaerobic nitric oxide (NO) reductase, acts as a transcriptional activator for at least the norVW operon. Activation also requires sigma-54. The sequence is that of Anaerobic nitric oxide reductase transcription regulator NorR from Escherichia coli O127:H6 (strain E2348/69 / EPEC).